Consider the following 52-residue polypeptide: uncharacterized protein (52 aa).

Positions 3–46 form a coiled coil; the sequence is KIQLESSNQSVLKLEERRLNLTAEIERIYGQMDLKRKELENANL.

This is an uncharacterized protein from Dictyostelium discoideum (Social amoeba).